We begin with the raw amino-acid sequence, 1297 residues long: Botulinum neurotoxin type G (1297 aa).

Histidine 230 provides a ligand contact to Zn(2+). Residue glutamate 231 is part of the active site. Zn(2+) contacts are provided by histidine 234 and glutamate 268. Cysteine 436 and cysteine 450 are joined by a disulfide. The segment at lysine 446–isoleucine 862 is translocation domain (TD). The belt stretch occupies residues asparagine 488 to valine 537. The interval asparagine 868–glutamate 1073 is N-terminus of receptor binding domain (N-RBD). Positions threonine 1089–glutamate 1297 are C-terminus of receptor binding domain (C-RBD). The Host ganglioside-binding motif signature appears at serine 1266–tyrosine 1269.

This sequence belongs to the peptidase M27 family. As to quaternary structure, heterodimer; disulfide-linked heterodimer of a light chain (LC) and a heavy chain (HC). The LC has the proteolytic/pharmacological activity, while the N- and C-termini of the HC mediate channel formation and toxin binding, respectively. Interacts with host receptors synaptotagmin-1 and -2 (SYT1 and SYT2). Zn(2+) is required as a cofactor.

The protein localises to the secreted. It is found in the host cytoplasm. Its subcellular location is the host cytosol. The protein resides in the host synapse. It localises to the host presynaptic cell membrane. The protein localises to the host cytoplasmic vesicle. It is found in the host secretory vesicle. Its subcellular location is the host synaptic vesicle membrane. It carries out the reaction Limited hydrolysis of proteins of the neuroexocytosis apparatus, synaptobrevins, SNAP25 or syntaxin. No detected action on small molecule substrates.. In terms of biological role, botulinum toxin causes flaccid paralysis by inhibiting neurotransmitter (acetylcholine) release from the presynaptic membranes of nerve terminals of the eukaryotic host skeletal and autonomic nervous system, with frequent heart or respiratory failure. Precursor of botulinum neurotoxin G which has 2 coreceptors; complex polysialylated gangliosides found on neural tissue and specific membrane-anchored proteins found in synaptic vesicles. Receptor proteins are exposed on host presynaptic cell membrane during neurotransmitter release, when the toxin heavy chain (HC) binds to them. Upon synaptic vesicle recycling the toxin is taken up via the endocytic pathway. When the pH of the toxin-containing endosome drops a structural rearrangement occurs so that the N-terminus of the HC forms pores that allows the light chain (LC) to translocate into the cytosol. Once in the cytosol the disulfide bond linking the 2 subunits is reduced and LC cleaves its target protein on synaptic vesicles, preventing their fusion with the cytoplasmic membrane and thus neurotransmitter release. Binds to host peripheral neuronal presynaptic membranes via synaptotagmins 1 and 2 (SYT1 and SYT2). Toxin binds to the membrane proximal extra-cytoplasmic region of SYT1 and SYT2 that is transiently exposed outside of cells during exocytosis; exogenous gangliosides do not enhance binding and subsequent uptake of toxin into host cells. Toxin activity can be blocked by the appropriate synaptotagmin protein fragments in cell culture. Has proteolytic activity. After translocation into the eukaryotic host cytosol acts as a zinc endopeptidase that cleaves synaptobrevins-1, -2 and -3 (also called VAMP1, VAMP2 and VAMP3). Hydrolyzes the '81-Ala-|-Ala-82' bond of VAMP2, and probably also the equivalent 'Ala-|-Ala' sites in VAMP1 and VAMP3. Has low activity on A.californica synaptobrevin and none on D.melanogaster synaptobrevin or cellubrevin, have a slightly different sequence. Functionally, responsible for host cell targeting and translocation of light chain (LC) into host cytosol. Composed of 3 subdomains; the translocation domain (TD), and N-terminus and C-terminus of the receptor-binding domain (N-RBD, C-RBD). The RBD is responsible for the adherence of the toxin to the cell surface. It simultaneously recognizes 2 coreceptors; polysialated gangliosides and the receptor proteins SYT1 and SYT2 in close proximity on host synaptic vesicles. The N-terminus of the TD wraps an extended belt around the perimeter of the LC, protecting Zn(2+) in the active site; it may also prevent premature LC dissociation from the translocation channel and protect toxin prior to translocation. The TD inserts into synaptic vesicle membrane to allow translocation into the host cytosol. Has 2 coreceptors; complex gangliosides found primarily on neural tissue and host synaptotagmin-1 and -2 (SYT1 and SYT2) which bind to separate sites at the tip of the HC. HC alone binds to host receptors SYT1 and SYT2; C-RBD interacts with host SYT2. Has equal affinity for SYT1 and SYT2; gangliosides are not required for (or only very slightly improve) binding to a membrane-anchored receptor fragment. Has also been shown to only bind SYT1; the assay methods were different. Binds ganglioside GT1b. Significantly decreases uptake and toxicity of whole BoNT/B and BoNT/G. This Clostridium botulinum protein is Botulinum neurotoxin type G (botG).